The chain runs to 269 residues: Shikimate dehydrogenase (NADP(+)) (269 aa).

Residues 17-19 and T64 each bind shikimate; that span reads SKS. K68 acts as the Proton acceptor in catalysis. E80 contributes to the NADP(+) binding site. Positions 89 and 105 each coordinate shikimate. Residues 130 to 134, 154 to 159, and M213 each bind NADP(+); these read GAGGA and NRTHAK. Y215 serves as a coordination point for shikimate. NADP(+) is bound at residue G237.

Belongs to the shikimate dehydrogenase family. As to quaternary structure, homodimer.

The enzyme catalyses shikimate + NADP(+) = 3-dehydroshikimate + NADPH + H(+). It participates in metabolic intermediate biosynthesis; chorismate biosynthesis; chorismate from D-erythrose 4-phosphate and phosphoenolpyruvate: step 4/7. Its function is as follows. Involved in the biosynthesis of the chorismate, which leads to the biosynthesis of aromatic amino acids. Catalyzes the reversible NADPH linked reduction of 3-dehydroshikimate (DHSA) to yield shikimate (SA). In Neisseria cinerea, this protein is Shikimate dehydrogenase (NADP(+)).